Reading from the N-terminus, the 226-residue chain is MNENLFASFITPTMMGFPIVVAIIMFPSILFPSSKRLINNRLHSFQHWLVKLIIKQMMLIHTPKGRTWTLMIVSLIMFIGSTNLLGLLPHTFTPTTQLSMNLSMAIPLWAGAVITGFRHKLKSSLAHFLPQGTPISLIPMLIIIETISLFIQPMALAVRLTANITAGHLLMHLIGGATLVLMNISPPTATITFIILLLLTILEFAVALIQAYVFTLLVSLYLHDNT.

6 helical membrane passes run 6–26, 68–88, 97–117, 138–158, 164–184, and 189–209; these read FASF…IIMF, WTLM…LGLL, QLSM…ITGF, IPML…ALAV, ITAG…LMNI, and ATIT…VALI.

It belongs to the ATPase A chain family. Component of the ATP synthase complex composed at least of ATP5F1A/subunit alpha, ATP5F1B/subunit beta, ATP5MC1/subunit c (homooctomer), MT-ATP6/subunit a, MT-ATP8/subunit 8, ATP5ME/subunit e, ATP5MF/subunit f, ATP5MG/subunit g, ATP5MK/subunit k, ATP5MJ/subunit j, ATP5F1C/subunit gamma, ATP5F1D/subunit delta, ATP5F1E/subunit epsilon, ATP5PF/subunit F6, ATP5PB/subunit b, ATP5PD/subunit d, ATP5PO/subunit OSCP. ATP synthase complex consists of a soluble F(1) head domain (subunits alpha(3) and beta(3)) - the catalytic core - and a membrane F(0) domain - the membrane proton channel (subunits c, a, 8, e, f, g, k and j). These two domains are linked by a central stalk (subunits gamma, delta, and epsilon) rotating inside the F1 region and a stationary peripheral stalk (subunits F6, b, d, and OSCP). Interacts with DNAJC30; interaction is direct.

The protein localises to the mitochondrion inner membrane. The catalysed reaction is H(+)(in) = H(+)(out). In terms of biological role, subunit a, of the mitochondrial membrane ATP synthase complex (F(1)F(0) ATP synthase or Complex V) that produces ATP from ADP in the presence of a proton gradient across the membrane which is generated by electron transport complexes of the respiratory chain. ATP synthase complex consist of a soluble F(1) head domain - the catalytic core - and a membrane F(1) domain - the membrane proton channel. These two domains are linked by a central stalk rotating inside the F(1) region and a stationary peripheral stalk. During catalysis, ATP synthesis in the catalytic domain of F(1) is coupled via a rotary mechanism of the central stalk subunits to proton translocation. With the subunit c (ATP5MC1), forms the proton-conducting channel in the F(0) domain, that contains two crucial half-channels (inlet and outlet) that facilitate proton movement from the mitochondrial intermembrane space (IMS) into the matrix. Protons are taken up via the inlet half-channel and released through the outlet half-channel, following a Grotthuss mechanism. The polypeptide is ATP synthase F(0) complex subunit a (Mus musculus (Mouse)).